The primary structure comprises 312 residues: HPr kinase/phosphorylase (312 aa).

Active-site residues include His-139 and Lys-160. 154–161 (GSSGVGKS) provides a ligand contact to ATP. Ser-161 is a Mg(2+) binding site. The active-site Proton acceptor; for phosphorylation activity. Proton donor; for dephosphorylation activity is Asp-178. The segment at 202-211 (LEIRGLGIIN) is important for the catalytic mechanism of both phosphorylation and dephosphorylation. Glu-203 is a binding site for Mg(2+). Arg-244 is an active-site residue. The tract at residues 265-270 (PVRPGR) is important for the catalytic mechanism of dephosphorylation.

This sequence belongs to the HPrK/P family. Homohexamer. Mg(2+) is required as a cofactor.

The enzyme catalyses [HPr protein]-L-serine + ATP = [HPr protein]-O-phospho-L-serine + ADP + H(+). The catalysed reaction is [HPr protein]-O-phospho-L-serine + phosphate + H(+) = [HPr protein]-L-serine + diphosphate. In terms of biological role, catalyzes the ATP- as well as the pyrophosphate-dependent phosphorylation of a specific serine residue in HPr, a phosphocarrier protein of the phosphoenolpyruvate-dependent sugar phosphotransferase system (PTS). HprK/P also catalyzes the pyrophosphate-producing, inorganic phosphate-dependent dephosphorylation (phosphorolysis) of seryl-phosphorylated HPr (P-Ser-HPr). The two antagonistic activities of HprK/P are regulated by several intracellular metabolites, which change their concentration in response to the absence or presence of rapidly metabolisable carbon sources (glucose, fructose, etc.) in the growth medium. Therefore, by controlling the phosphorylation state of HPr, HPrK/P is a sensor enzyme that plays a major role in the regulation of carbon metabolism and sugar transport: it mediates carbon catabolite repression (CCR), and regulates PTS-catalyzed carbohydrate uptake and inducer exclusion. This is HPr kinase/phosphorylase from Listeria innocua serovar 6a (strain ATCC BAA-680 / CLIP 11262).